The primary structure comprises 212 residues: Cytidylate kinase (212 aa).

7–15 lines the ATP pocket; sequence GPAASGKGT.

It belongs to the cytidylate kinase family. Type 1 subfamily.

It is found in the cytoplasm. It carries out the reaction CMP + ATP = CDP + ADP. The enzyme catalyses dCMP + ATP = dCDP + ADP. The chain is Cytidylate kinase from Bradyrhizobium sp. (strain ORS 278).